Here is a 109-residue protein sequence, read N- to C-terminus: MAQFEWVHAAWLALAIVLEIIANVFLKFSDGFRRKIFGLLSLAAVLAAFSALSQAVKGIDLSVAYALWGGFGIAATLAAGWILFGQRLNRKGWIGLVLLLAGMIMVKLA.

Residues 1–5 are Periplasmic-facing; that stretch reads MAQFE. Residues 6–26 traverse the membrane as a helical segment; sequence WVHAAWLALAIVLEIIANVFL. The Cytoplasmic portion of the chain corresponds to 27–35; sequence KFSDGFRRK. Residues 36–56 form a helical membrane-spanning segment; it reads IFGLLSLAAVLAAFSALSQAV. Residues 57-63 are Periplasmic-facing; sequence KGIDLSV. The helical transmembrane segment at 64 to 84 threads the bilayer; the sequence is AYALWGGFGIAATLAAGWILF. The Cytoplasmic portion of the chain corresponds to 85–87; that stretch reads GQR. A helical transmembrane segment spans residues 88–108; that stretch reads LNRKGWIGLVLLLAGMIMVKL. A109 is a topological domain (periplasmic).

The protein belongs to the drug/metabolite transporter (DMT) superfamily. Small multidrug resistance (SMR) (TC 2.A.7.1) family. MdtI subfamily. Forms a complex with MdtJ.

It is found in the cell inner membrane. Functionally, catalyzes the excretion of spermidine. In Escherichia coli O6:H1 (strain CFT073 / ATCC 700928 / UPEC), this protein is Spermidine export protein MdtI (mdtI).